We begin with the raw amino-acid sequence, 185 residues long: uncharacterized protein (185 aa).

It to M.thermoautotrophicum MTH236.

This is an uncharacterized protein from Methanocaldococcus jannaschii (strain ATCC 43067 / DSM 2661 / JAL-1 / JCM 10045 / NBRC 100440) (Methanococcus jannaschii).